The sequence spans 620 residues: Glutathione-regulated potassium-efflux system protein KefC (620 aa).

12 helical membrane passes run 4-24 (HTLLQALIYLGSAALIVPIAV), 26-46 (LGLGSVLGYLIAGCIIGPWGL), 54-74 (SILHFAEIGVVLMLFVIGLEL), 90-110 (GALQMVVCGGLIGLFCMFLGL), 114-134 (VAELIGMTLALSSTAIAMQAM), 149-169 (FAVLLFQDIAAIPLVAMIPLL), 178-198 (LGAFALSALKVAGALALVVLL), 218-238 (VFSAVALFLVFGFGLLLEEVG), 270-290 (GLLLGLFFIGVGMSIDFGTLV), 294-314 (LRILLLLAGFLAIKIVMLWLV), 327-347 (WFAVLLGQGSEFAFVVFGAAQ), and 359-379 (ALTLAVALSMAATPIFLVLLT). An RCK N-terminal domain is found at 399 to 518 (QPRVIVAGFG…AGVAMPERET (120 aa)). Residues 599 to 620 (QGTAEGKHSGEAADEPEVKPSI) form a disordered region.

It belongs to the monovalent cation:proton antiporter 2 (CPA2) transporter (TC 2.A.37) family. KefC subfamily. Homodimer. Interacts with the regulatory subunit KefF.

It localises to the cell inner membrane. In terms of biological role, pore-forming subunit of a potassium efflux system that confers protection against electrophiles. Catalyzes K(+)/H(+) antiport. The chain is Glutathione-regulated potassium-efflux system protein KefC from Salmonella dublin (strain CT_02021853).